Reading from the N-terminus, the 342-residue chain is Cell division protein ZipA (342 aa).

The Periplasmic segment spans residues 1–6 (MEDLQL). A helical membrane pass occupies residues 7–27 (VLFILGAIAIVAVLVHGFWSI). Topologically, residues 28 to 342 (RRQQPKSLKD…DYLHRIRANA (315 aa)) are cytoplasmic. The disordered stretch occupies residues 33–57 (KSLKDSPMGNFYKQQADKESPPKRV). The segment covering 47–57 (QADKESPPKRV) has biased composition (basic and acidic residues).

Belongs to the ZipA family. As to quaternary structure, interacts with FtsZ via their C-terminal domains.

It is found in the cell inner membrane. Essential cell division protein that stabilizes the FtsZ protofilaments by cross-linking them and that serves as a cytoplasmic membrane anchor for the Z ring. Also required for the recruitment to the septal ring of downstream cell division proteins. This chain is Cell division protein ZipA, found in Shewanella putrefaciens (strain CN-32 / ATCC BAA-453).